We begin with the raw amino-acid sequence, 264 residues long: MTVFQALVLGIIQGLGEFLPISSSAHLVLVPWLFGWQYAGLTFDVALHLGTLISIAAFFWKEWIVLIGSALRRRGTHEARMFWYLVLATVPGAVMGYLLEEQAETVFRTPLLIGIMLIVMGIFLYWADAKKPAVKGMREISMADSLLIGLSQAFAIIPGVSRSGVTMTAGRALGLSRETAARFSFLLSTPIIVGAGLFKLKDITPGDVNTAFITGVASSALVGFISISFLLKYLTGRSFALFVWYRLVAGLAVIVLAAARQFGF.

8 helical membrane passes run 1–21 (MTVFQALVLGIIQGLGEFLPI), 40–60 (GLTFDVALHLGTLISIAAFFW), 81–101 (MFWYLVLATVPGAVMGYLLEE), 109–129 (TPLLIGIMLIVMGIFLYWADA), 140–160 (ISMADSLLIGLSQAFAIIPGV), 183–203 (FSFLLSTPIIVGAGLFKLKDI), 211–231 (AFITGVASSALVGFISISFLL), and 239–259 (FALFVWYRLVAGLAVIVLAAA).

This sequence belongs to the UppP family.

It localises to the cell membrane. It catalyses the reaction di-trans,octa-cis-undecaprenyl diphosphate + H2O = di-trans,octa-cis-undecaprenyl phosphate + phosphate + H(+). Catalyzes the dephosphorylation of undecaprenyl diphosphate (UPP). Confers resistance to bacitracin. In Pelotomaculum thermopropionicum (strain DSM 13744 / JCM 10971 / SI), this protein is Undecaprenyl-diphosphatase.